The following is a 181-amino-acid chain: Adenine phosphoribosyltransferase (181 aa).

It belongs to the purine/pyrimidine phosphoribosyltransferase family. In terms of assembly, homodimer.

Its subcellular location is the cytoplasm. It carries out the reaction AMP + diphosphate = 5-phospho-alpha-D-ribose 1-diphosphate + adenine. It participates in purine metabolism; AMP biosynthesis via salvage pathway; AMP from adenine: step 1/1. Its function is as follows. Catalyzes a salvage reaction resulting in the formation of AMP, that is energically less costly than de novo synthesis. The polypeptide is Adenine phosphoribosyltransferase (Neorhizobium galegae (Rhizobium galegae)).